Reading from the N-terminus, the 541-residue chain is Atlastin-3 (541 aa).

The segment at 1–22 (MLSPQRTAAVASRGAGDAMENG) is disordered. The N-terminal hypervariable region (HVR) stretch occupies residues 1–25 (MLSPQRTAAVASRGAGDAMENGKPG). The Cytoplasmic portion of the chain corresponds to 1–445 (MLSPQRTAAV…NVFSTFRTPA (445 aa)). The GB1/RHD3-type G domain maps to 57–305 (DLDVVVVSVA…LIPYVLNPSK (249 aa)). Arg70, Lys71, Gly72, Lys73, Ser74, Phe75, and Arg109 together coordinate GDP. Asp142 is a Mg(2+) binding site. 4 residues coordinate GDP: Arg213, Asp214, Val272, and Ser275. Positions 343–434 (MLQATAEANN…YENFCKHNGS (92 aa)) are 3HB (three-helix bundle) domain. Residue Lys391 is modified to N6-acetyllysine. Residues 446 to 466 (VLFTGIAALYIASGFTGFIGL) traverse the membrane as a helical segment. A topological domain (lumenal) is located at residue Glu467. The helical transmembrane segment at 468–488 (VVAQLFNCMVGLLLIALLTWG) threads the bilayer. Residues 489-541 (YIRYSGQYRELGGAIDSGAAYVLEQASSHIGNSTQAAVRDAVVGRPPADKKSQ) lie on the Cytoplasmic side of the membrane.

This sequence belongs to the TRAFAC class dynamin-like GTPase superfamily. GB1/RHD3 GTPase family. GB1 subfamily. As to quaternary structure, monomeric and homodimeric. The homodimer, transiently formed by two molecules on opposing membranes, is the active form mediating ER membrane fusion. Interacts with ZFYVE27; both proteins are involved in endoplasmic reticulum tubular network organization. Interacts with REEP5; both proteins are involved in endoplasmic reticulum tubular network organization. As to expression, expressed in cardiomyocytes (at protein level).

It localises to the endoplasmic reticulum membrane. The catalysed reaction is GTP + H2O = GDP + phosphate + H(+). Its function is as follows. Atlastin-3 (ATL3) is a membrane-anchored GTPase that mediates the GTP-dependent fusion of endoplasmic reticulum (ER) membranes, maintaining the continuous ER network. It facilitates the formation of three-way junctions where ER tubules intersect. Two atlastin-3 on neighboring ER tubules bind GTP and form loose homodimers through the GB1/RHD3-type G domains and 3HB regions. Upon GTP hydrolysis, the 3HB regions tighten, pulling the membranes together to drive their fusion. After fusion, the homodimer disassembles upon release of inorganic phosphate (Pi). Subsequently, GDP dissociates, resetting the monomers to a conformation ready for a new fusion cycle. In Mus musculus (Mouse), this protein is Atlastin-3.